The sequence spans 368 residues: Phospho-N-acetylmuramoyl-pentapeptide-transferase (368 aa).

9 helical membrane-spanning segments follow: residues 30-50 (AAAITALLITVFAGPSFIRFL), 72-92 (VPTMGGLLIILAVEISALLWA), 98-118 (HVWLIMLAVLWMGLIGFIDDY), 139-159 (VALGLVVGFYTWNDPAFSVLL), 170-190 (FSVDYGIFYIPVVIFIITAVS), 201-221 (GLAAGNAAIVTMALGLFAYLG), 238-258 (AGEIAVVSMAIVMACVGFLWF), 262-284 (PAEVFMGDTGSLALGSAIAVIAL), and 345-365 (KIVIRFWIISILLFLTSLMTL).

This sequence belongs to the glycosyltransferase 4 family. MraY subfamily. It depends on Mg(2+) as a cofactor.

It localises to the cell inner membrane. It catalyses the reaction UDP-N-acetyl-alpha-D-muramoyl-L-alanyl-gamma-D-glutamyl-meso-2,6-diaminopimeloyl-D-alanyl-D-alanine + di-trans,octa-cis-undecaprenyl phosphate = di-trans,octa-cis-undecaprenyl diphospho-N-acetyl-alpha-D-muramoyl-L-alanyl-D-glutamyl-meso-2,6-diaminopimeloyl-D-alanyl-D-alanine + UMP. It participates in cell wall biogenesis; peptidoglycan biosynthesis. Functionally, catalyzes the initial step of the lipid cycle reactions in the biosynthesis of the cell wall peptidoglycan: transfers peptidoglycan precursor phospho-MurNAc-pentapeptide from UDP-MurNAc-pentapeptide onto the lipid carrier undecaprenyl phosphate, yielding undecaprenyl-pyrophosphoryl-MurNAc-pentapeptide, known as lipid I. In Chlorobaculum parvum (strain DSM 263 / NCIMB 8327) (Chlorobium vibrioforme subsp. thiosulfatophilum), this protein is Phospho-N-acetylmuramoyl-pentapeptide-transferase.